The chain runs to 156 residues: Deoxyuridine 5'-triphosphate nucleotidohydrolase (156 aa).

Residues 76-78, N89, 93-95, and K103 contribute to the substrate site; these read RSG and TVD.

This sequence belongs to the dUTPase family. It depends on Mg(2+) as a cofactor.

The catalysed reaction is dUTP + H2O = dUMP + diphosphate + H(+). It participates in pyrimidine metabolism; dUMP biosynthesis; dUMP from dCTP (dUTP route): step 2/2. This enzyme is involved in nucleotide metabolism: it produces dUMP, the immediate precursor of thymidine nucleotides and it decreases the intracellular concentration of dUTP so that uracil cannot be incorporated into DNA. The sequence is that of Deoxyuridine 5'-triphosphate nucleotidohydrolase from Rhizobium leguminosarum bv. trifolii (strain WSM2304).